The primary structure comprises 506 residues: Ribose import ATP-binding protein RbsA 2 (506 aa).

ABC transporter domains follow at residues 5 to 241 and 254 to 498; these read LRLS…VGRR and ADAP…TAGT. Position 37–44 (37–44) interacts with ATP; sequence GENGAGKS.

It belongs to the ABC transporter superfamily. Ribose importer (TC 3.A.1.2.1) family. As to quaternary structure, the complex is composed of an ATP-binding protein (RbsA), two transmembrane proteins (RbsC) and a solute-binding protein (RbsB).

It is found in the cell inner membrane. It carries out the reaction D-ribose(out) + ATP + H2O = D-ribose(in) + ADP + phosphate + H(+). Its function is as follows. Part of the ABC transporter complex RbsABC involved in ribose import. Responsible for energy coupling to the transport system. This Burkholderia cenocepacia (strain HI2424) protein is Ribose import ATP-binding protein RbsA 2.